Consider the following 558-residue polypeptide: ATP-dependent RNA helicase ROK1 (558 aa).

Residues 26-91 (PSAKQQQYEQ…EEAPPLEIQT (66 aa)) are disordered. 2 stretches are compositionally biased toward basic and acidic residues: residues 34-53 (EQHKEDTLQHQVDKEIDFFH) and 64-81 (DSTDSKHTKEEKKEKKED). Residues 120 to 148 (DMIGRFRLDSKLLSNLLEAEFVEPTAIQC) carry the Q motif motif. In terms of domain architecture, Helicase ATP-binding spans 151–329 (LPISLSGRDL…HSIMRDPIRV (179 aa)). 164–171 (APTGSGKT) contacts ATP. The short motif at 276–279 (DEAD) is the DEAD box element. A Helicase C-terminal domain is found at 340 to 504 (TIDQKLVFTG…GFSGWMENMT (165 aa)). The tract at residues 509–558 (NEKKKVKHKEIDRKDISTVPKLVKHKRKQREQMIEASKKRKQEETRNALQ) is disordered. The span at 538 to 558 (REQMIEASKKRKQEETRNALQ) shows a compositional bias: basic and acidic residues.

It belongs to the DEAD box helicase family. DDX52/ROK1 subfamily. As to quaternary structure, interacts with the U3 snoRNA and is associated with the 90S and 40S pre-ribosomes.

It is found in the nucleus. The protein resides in the nucleolus. The enzyme catalyses ATP + H2O = ADP + phosphate + H(+). Its function is as follows. ATP-dependent RNA helicase involved in 40S ribosomal subunit biogenesis. Required for the processing and cleavage of 35S pre-rRNA at sites A0, A1, and A2, leading to mature 18S rRNA. This Scheffersomyces stipitis (strain ATCC 58785 / CBS 6054 / NBRC 10063 / NRRL Y-11545) (Yeast) protein is ATP-dependent RNA helicase ROK1 (ROK1).